A 154-amino-acid polypeptide reads, in one-letter code: Transcription antitermination protein NusB (154 aa).

It belongs to the NusB family.

In terms of biological role, involved in transcription antitermination. Required for transcription of ribosomal RNA (rRNA) genes. Binds specifically to the boxA antiterminator sequence of the ribosomal RNA (rrn) operons. The sequence is that of Transcription antitermination protein NusB from Bordetella parapertussis (strain 12822 / ATCC BAA-587 / NCTC 13253).